Here is a 69-residue protein sequence, read N- to C-terminus: Nodulin-3 (69 aa).

The signal sequence occupies residues 1–24; sequence MAKILKFVFAIILFFSLFLLSMEA.

This chain is Nodulin-3 (ENOD3), found in Pisum sativum (Garden pea).